A 790-amino-acid chain; its full sequence is MMEAKPKRRIVTENGDTGEDLVLATLIGNGDDVGPLVRHAFEMGRPEPLVHQLKNVARKKEAEIEDLCKTHYEEFIVAVDELRGVLVDAEELKSDLASDNFRLQEVGSALLVKLEELLESYAVKKNVTEAIKMSKICVQALELCVKCNSYISEGQFYHALKTMDLIEKSYLKLIPLKVLKLVIERRIPVIKTHIEKKVCSQFNEWLVHIRSSSKNIGQTAIGLTASARQREEEMLERQRRAEEQNTGGLGELAYTLDVEDSEQDSVLKFDLTPLYRAYHIHTILGVPERFRDYYYENRLLQLQSDLQITYTQPFVESYQTFLAQVAGYFIVEDRVIRTAGDFLLADQVETMWETAISKIVAILENQFARMDSPTHLLLVKDYVTLLGTTLRQYGYEVGPVLDALDKSRDKYHELLLEECRKQIVTAITEDTYQQMVIKKEADYENNVLSFNLQTSDIMPAFTYIAPFSSMVPDVCRIIRSYIKGSVDYLSYGVNTNFFSVLRKYLDKILIDVLNEVILETISNNSIGVSQAMQIAANISFLEKASDYFLRHAAQLCGIPSRSVERPQASLAAKVVLKTSRDAAYLALLNVVNTKLDEFMKLTENVNWTTEEMPQGPHEYINEVVIYLETVMSTAQQILPMDALYKVGVGAIEHISNSIVSTFLSDSIKRFNANAVSAINHDLRVIENFADERYHSSGLNEIYKEGSFRSYLVEARQLINLLSSSQPENFMNPVIRERNYNTLDYKKVATICEKFKDSADGIFGSLANRNTKLTAKKKSMDMLKKRLKEFN.

The stretch at 49-70 forms a coiled coil; that stretch reads LVHQLKNVARKKEAEIEDLCKT.

It belongs to the SEC15 family. The exocyst complex is composed of SEC3, SEC5, SEC6, SEC8, SEC10, EXO70A1 and EXO84B.

The protein localises to the cytoplasm. The protein resides in the cytosol. Functionally, component of the exocyst complex involved in the docking of exocytic vesicles with fusion sites on the plasma membrane during regulated or polarized secretion. Involved in polarized cell growth and organ morphogenesis. During cytokinesis, involved in cell plate initiation, cell plate maturation and formation of new primary cell wall. This chain is Exocyst complex component SEC15A (SEC15A), found in Arabidopsis thaliana (Mouse-ear cress).